Here is a 59-residue protein sequence, read N- to C-terminus: Large ribosomal subunit protein uL30 (59 aa).

This sequence belongs to the universal ribosomal protein uL30 family. Part of the 50S ribosomal subunit.

In Leptospira interrogans serogroup Icterohaemorrhagiae serovar copenhageni (strain Fiocruz L1-130), this protein is Large ribosomal subunit protein uL30.